Reading from the N-terminus, the 80-residue chain is Exodeoxyribonuclease 7 small subunit (80 aa).

This sequence belongs to the XseB family. In terms of assembly, heterooligomer composed of large and small subunits.

The protein resides in the cytoplasm. It carries out the reaction Exonucleolytic cleavage in either 5'- to 3'- or 3'- to 5'-direction to yield nucleoside 5'-phosphates.. In terms of biological role, bidirectionally degrades single-stranded DNA into large acid-insoluble oligonucleotides, which are then degraded further into small acid-soluble oligonucleotides. This is Exodeoxyribonuclease 7 small subunit from Pseudomonas fluorescens (strain ATCC BAA-477 / NRRL B-23932 / Pf-5).